Here is a 94-residue protein sequence, read N- to C-terminus: Small ribosomal subunit protein bS16 (94 aa).

It belongs to the bacterial ribosomal protein bS16 family.

The chain is Small ribosomal subunit protein bS16 from Thermosipho africanus (strain TCF52B).